We begin with the raw amino-acid sequence, 387 residues long: Phosphoglycerate kinase (387 aa).

Substrate is bound by residues 21 to 23, arginine 36, 59 to 62, arginine 113, and arginine 146; these read DLN and HLGR. ATP is bound by residues lysine 197, glutamate 314, and 340–343; that span reads GGDT.

It belongs to the phosphoglycerate kinase family. As to quaternary structure, monomer.

Its subcellular location is the cytoplasm. It carries out the reaction (2R)-3-phosphoglycerate + ATP = (2R)-3-phospho-glyceroyl phosphate + ADP. It participates in carbohydrate degradation; glycolysis; pyruvate from D-glyceraldehyde 3-phosphate: step 2/5. The polypeptide is Phosphoglycerate kinase (Marinomonas sp. (strain MWYL1)).